Reading from the N-terminus, the 969-residue chain is Leucine--tRNA ligase (969 aa).

A 'HIGH' region motif is present at residues 45-55 (PYTNAPLHIGH). Positions 649–653 (KMSKS) match the 'KMSKS' region motif. Position 652 (lysine 652) interacts with ATP.

The protein belongs to the class-I aminoacyl-tRNA synthetase family.

The protein resides in the cytoplasm. The catalysed reaction is tRNA(Leu) + L-leucine + ATP = L-leucyl-tRNA(Leu) + AMP + diphosphate. This chain is Leucine--tRNA ligase, found in Staphylothermus marinus (strain ATCC 43588 / DSM 3639 / JCM 9404 / F1).